The chain runs to 440 residues: Glucoside xylosyltransferase 1 (440 aa).

Topologically, residues 1 to 6 (MRRYLR) are cytoplasmic. Residues 7 to 29 (VVVLCVACGFCSLLYAFSQLAVS) form a helical; Signal-anchor for type II membrane protein membrane-spanning segment. Residues 30–440 (LEEGTGGGGG…DRYARSPKEK (411 aa)) lie on the Lumenal side of the membrane. N173, N237, and N278 each carry an N-linked (GlcNAc...) asparagine glycan.

Belongs to the glycosyltransferase 8 family.

It localises to the membrane. The catalysed reaction is 3-O-(beta-D-glucosyl)-L-seryl-[EGF-like domain protein] + UDP-alpha-D-xylose = 3-O-[alpha-D-xylosyl-(1-&gt;3)-beta-D-glucosyl]-L-seryl-[EGF-like domain protein] + UDP + H(+). Its function is as follows. Glycosyltransferase which elongates the O-linked glucose attached to EGF-like repeats in the extracellular domain of Notch proteins by catalyzing the addition of xylose. The chain is Glucoside xylosyltransferase 1 (GXYLT1) from Homo sapiens (Human).